A 549-amino-acid chain; its full sequence is Urocanate hydratase (549 aa).

NAD(+) contacts are provided by residues 46-47, glutamine 124, glutamate 190, arginine 195, 236-237, 257-261, 267-268, and tyrosine 316; these read GG, NA, QTSAH, and YV. The active site involves cysteine 404. Residue glycine 486 coordinates NAD(+).

The protein belongs to the urocanase family. Requires NAD(+) as cofactor.

The protein resides in the cytoplasm. It carries out the reaction 4-imidazolone-5-propanoate = trans-urocanate + H2O. It functions in the pathway amino-acid degradation; L-histidine degradation into L-glutamate; N-formimidoyl-L-glutamate from L-histidine: step 2/3. Catalyzes the conversion of urocanate to 4-imidazolone-5-propionate. The sequence is that of Urocanate hydratase from Thermoanaerobacter pseudethanolicus (strain ATCC 33223 / 39E) (Clostridium thermohydrosulfuricum).